We begin with the raw amino-acid sequence, 284 residues long: D-tagatose-1,6-bisphosphate aldolase subunit GatY (284 aa).

Catalysis depends on Asp-82, which acts as the Proton donor. Zn(2+)-binding residues include His-83 and His-180. Gly-181 provides a ligand contact to dihydroxyacetone phosphate. Residue His-208 participates in Zn(2+) binding. Dihydroxyacetone phosphate contacts are provided by residues 209 to 211 (GAS) and 230 to 233 (NVAT).

It belongs to the class II fructose-bisphosphate aldolase family. TagBP aldolase GatY subfamily. As to quaternary structure, forms a complex with GatZ. Requires Zn(2+) as cofactor.

It carries out the reaction D-tagatofuranose 1,6-bisphosphate = D-glyceraldehyde 3-phosphate + dihydroxyacetone phosphate. It functions in the pathway carbohydrate metabolism; D-tagatose 6-phosphate degradation; D-glyceraldehyde 3-phosphate and glycerone phosphate from D-tagatose 6-phosphate: step 2/2. Functionally, catalytic subunit of the tagatose-1,6-bisphosphate aldolase GatYZ, which catalyzes the reversible aldol condensation of dihydroxyacetone phosphate (DHAP or glycerone-phosphate) with glyceraldehyde 3-phosphate (G3P) to produce tagatose 1,6-bisphosphate (TBP). Requires GatZ subunit for full activity and stability. Is involved in the catabolism of galactitol. The polypeptide is D-tagatose-1,6-bisphosphate aldolase subunit GatY (Escherichia coli O45:K1 (strain S88 / ExPEC)).